We begin with the raw amino-acid sequence, 201 residues long: Outer-membrane lipoprotein carrier protein (201 aa).

The first 21 residues, 1 to 21 (MKKVLLTVCAIALFGSQAAWA), serve as a signal peptide directing secretion.

It belongs to the LolA family. Monomer.

It localises to the periplasm. Participates in the translocation of lipoproteins from the inner membrane to the outer membrane. Only forms a complex with a lipoprotein if the residue after the N-terminal Cys is not an aspartate (The Asp acts as a targeting signal to indicate that the lipoprotein should stay in the inner membrane). The polypeptide is Outer-membrane lipoprotein carrier protein (Proteus mirabilis (strain HI4320)).